A 556-amino-acid polypeptide reads, in one-letter code: 2-succinyl-5-enolpyruvyl-6-hydroxy-3-cyclohexene-1-carboxylate synthase (556 aa).

Belongs to the TPP enzyme family. MenD subfamily. As to quaternary structure, homodimer. Mg(2+) serves as cofactor. The cofactor is Mn(2+). Thiamine diphosphate is required as a cofactor.

It carries out the reaction isochorismate + 2-oxoglutarate + H(+) = 5-enolpyruvoyl-6-hydroxy-2-succinyl-cyclohex-3-ene-1-carboxylate + CO2. The protein operates within quinol/quinone metabolism; 1,4-dihydroxy-2-naphthoate biosynthesis; 1,4-dihydroxy-2-naphthoate from chorismate: step 2/7. Its pathway is quinol/quinone metabolism; menaquinone biosynthesis. Functionally, catalyzes the thiamine diphosphate-dependent decarboxylation of 2-oxoglutarate and the subsequent addition of the resulting succinic semialdehyde-thiamine pyrophosphate anion to isochorismate to yield 2-succinyl-5-enolpyruvyl-6-hydroxy-3-cyclohexene-1-carboxylate (SEPHCHC). This Salmonella typhimurium (strain LT2 / SGSC1412 / ATCC 700720) protein is 2-succinyl-5-enolpyruvyl-6-hydroxy-3-cyclohexene-1-carboxylate synthase.